The primary structure comprises 451 residues: Trigger factor (451 aa).

A PPIase FKBP-type domain is found at 163–248; that stretch reads GDIIDMEYTV…IKALYVNILP (86 aa).

It belongs to the FKBP-type PPIase family. Tig subfamily.

It localises to the cytoplasm. The catalysed reaction is [protein]-peptidylproline (omega=180) = [protein]-peptidylproline (omega=0). Involved in protein export. Acts as a chaperone by maintaining the newly synthesized protein in an open conformation. Functions as a peptidyl-prolyl cis-trans isomerase. This chain is Trigger factor, found in Leptospira borgpetersenii serovar Hardjo-bovis (strain JB197).